Reading from the N-terminus, the 1360-residue chain is MAYSFTEKKRIRNNFGSRESILTEPDLLAIQIDSFNSFIQKDSKTKQDIGLHAVFQSVFPITAVNGYAQIEYVDYELQEPKFNVEECKLRGVTFASTLRVKLSLVLFDKNGSTLKKKRKIKQIIEEDIYLGQLPLMTETGTFVINGTERVVVSQLHRSPGVIFEHDKGKTHSSGKILFSSRIIPYRGSWLDFEYDHHEHLYVRIDRRRKLPVTTLLRAMGLSSEGILETFFEKTTIKLKAKSCDLNMVPIRLQRTIAEFDIVANQDVIVEKGRRITAKHVKLLKKVGIKSINVPLEYLLDKVISADIFDKDTGEILISANTIILEEVLELLNINKIKKIEILYINASETGAYISDTLRLDETQTEIEARMSIYHVMRPGEPATEDAVNLLFNNLFFKNDRYDLSKVGRMKLNRRLGIGSETGEHVLTNDDIISVIKLLINIKDGNDSVDDVDTLANRRVRAIGEMIENQFRVGLVRVEKVVREGLNLAETDELTPQDLINSKPVSAAVREFFGSSQLSQFMDQVNPLSGVTHKRRISALGPGGLTRERAGFEVRDVHPSHYGRLCPIETPEGPNIGLINTLAVYAKTNSYGFLETPYQVVKNGKVTKEVVYVSAIDEITHTIAQVNAIVNDKGKLMSDLISCRHKNEFVLVNSSKVTLIDIDSKQIASVAASLIPFLEHDDANRALMGSNMQRQAVPVLKAEKPLVGTGIERVVATDSRVCVTAKHSGVVEAVDASRIVIRVDSKKTKASELGVDIYNLTKYSRSNQNTCINQKPLVKTGDKISAADVLADGPSTDMGELALGQNMKIAFMPWNGYNFEDSILISEKVIQEDRYTTIHIEELTAYSRDTKLGPEEITADIPNVSELALAKLDEVGVVYVGARVKGGDILVGKVTPKSETVLSPEEKLLRAIFGEKANNVKDSSLRVGASKSGVVIDVQIFTRDRVEKDDRALSIDAERLERIKKDIDDEFGIIDGDIFRRVRLKLSGNMLSKVAGDIKAGEKLSAKLMKKLDNKDISKLKVEDAAVNKEVAALIKQAKAKQIEFKKFFEEEKAKINEGAELPPGVMKMVKVYVATSKTLQVGDKMAGRHGNKGVISRVSPVEDMPYLVDGSTIDVVLNPLGVPSRMNVGQVLEVHLGYAAKGLGYKITAMLDEKRTDMVKQIRDFLDEVYNSYGKQENLASFSDEEIIELASNLREGVPMATPVFDGIKEKDIKSLLKLADLPESGQEQLYDGRTGEPFDRHVTVGYMHMLKLNHLVNDKMHARSTGPYSLVTQQPLSGKAQFGGQRFGEMEVWALEAYGAAHTLREMLTVKSDDVGGRAKMYKSIVDGKNLTESIMPESFNVLVKEIRSLGIDVELEQH.

This sequence belongs to the RNA polymerase beta chain family. As to quaternary structure, the RNAP catalytic core consists of 2 alpha, 1 beta, 1 beta' and 1 omega subunit. When a sigma factor is associated with the core the holoenzyme is formed, which can initiate transcription.

The catalysed reaction is RNA(n) + a ribonucleoside 5'-triphosphate = RNA(n+1) + diphosphate. In terms of biological role, DNA-dependent RNA polymerase catalyzes the transcription of DNA into RNA using the four ribonucleoside triphosphates as substrates. This chain is DNA-directed RNA polymerase subunit beta, found in Ruthia magnifica subsp. Calyptogena magnifica.